Reading from the N-terminus, the 199-residue chain is Recombination protein RecR (199 aa).

A C4-type zinc finger spans residues 58–73; the sequence is CSVCYGLADSDPCHIC. Residues 81-176 form the Toprim domain; the sequence is DVVCVVEQGT…KITRIASGVP (96 aa).

Belongs to the RecR family.

May play a role in DNA repair. It seems to be involved in an RecBC-independent recombinational process of DNA repair. It may act with RecF and RecO. The protein is Recombination protein RecR of Desulfatibacillum aliphaticivorans.